Reading from the N-terminus, the 285-residue chain is Protoheme IX farnesyltransferase (285 aa).

The next 7 membrane-spanning stretches (helical) occupy residues Ala16 to Phe36, Trp40 to Ile60, Leu106 to Val126, Trp136 to Ala156, Ser165 to Leu185, Ile217 to Ile237, and Tyr265 to Leu285.

Belongs to the UbiA prenyltransferase family. Protoheme IX farnesyltransferase subfamily.

It is found in the cell membrane. It carries out the reaction heme b + (2E,6E)-farnesyl diphosphate + H2O = Fe(II)-heme o + diphosphate. Its pathway is porphyrin-containing compound metabolism; heme O biosynthesis; heme O from protoheme: step 1/1. Converts heme B (protoheme IX) to heme O by substitution of the vinyl group on carbon 2 of heme B porphyrin ring with a hydroxyethyl farnesyl side group. This chain is Protoheme IX farnesyltransferase, found in Sulfolobus acidocaldarius (strain ATCC 33909 / DSM 639 / JCM 8929 / NBRC 15157 / NCIMB 11770).